The following is a 263-amino-acid chain: Cell division coordinator CpoB (263 aa).

The N-terminal stretch at 1–26 (MSSNFRHQLLSLSLLVGIAAPWAAFA) is a signal peptide. A coiled-coil region spans residues 44-88 (QLERISNAHSQLLTQLQQQLSDNQSDIDSLRGQIQENQYQLNQVV). Positions 106–123 (AAAQSTSGDQSGAAASTT) are enriched in low complexity. The disordered stretch occupies residues 106 to 139 (AAAQSTSGDQSGAAASTTPTADAGTANAGAPVKS). 3 TPR repeats span residues 143-176 (NTDY…YPDS), 180-213 (PNAN…YPKS), and 217-250 (ADAM…YPGT).

It belongs to the CpoB family. Homotrimer. Interacts directly with the central domain of TolA and with PBP1B. Binding to TolA disrupts the homotrimer to form a YbgF/TolA heterodimer with weak affinity. Forms a quaternary complex with PBP1B-LpoB and TolA.

The protein localises to the periplasm. Mediates coordination of peptidoglycan synthesis and outer membrane constriction during cell division. Promotes physical and functional coordination of the PBP1B-LpoB and Tol machines, and regulates PBP1B activity in response to Tol energy state. The sequence is that of Cell division coordinator CpoB from Escherichia coli (strain K12).